Reading from the N-terminus, the 74-residue chain is Probable molt-inhibiting hormone (74 aa).

3 disulfides stabilise this stretch: Cys-6–Cys-43, Cys-23–Cys-39, and Cys-26–Cys-52. Residue Ala-74 is modified to Alanine amide.

It is found in the secreted. Its function is as follows. Inhibits Y-organs where molting hormone (ecdysteroid) is secreted. A molting cycle is initiated when MIH secretion diminishes or stops. Has little or no hyperglycemic activity. The protein is Probable molt-inhibiting hormone of Jasus lalandii (Cape rock lobster).